A 197-amino-acid chain; its full sequence is Small ribosomal subunit protein uS2 (197 aa).

Belongs to the universal ribosomal protein uS2 family.

The polypeptide is Small ribosomal subunit protein uS2 (rps2) (Archaeoglobus fulgidus (strain ATCC 49558 / DSM 4304 / JCM 9628 / NBRC 100126 / VC-16)).